The primary structure comprises 185 residues: MVKMSKQLRIAAPVEPVVVGKMGSAYGIRGWLRVFSSTEEAESIFDYQPWFIKRAREWQPIGLESWKRHNQDLIIKVRDIEDREAATLLTNCEIVVDASQLPDLDSGEYYWKDLLGCQVVTVGGYQLGEVIDLMETGSNDVLVVKANLKDAFGIQERLIPFLDGKVIKNVDLAAHIIEVDWDPGF.

Residues 106–185 (SGEYYWKDLL…IIEVDWDPGF (80 aa)) enclose the PRC barrel domain.

Belongs to the RimM family. Binds ribosomal protein uS19.

It localises to the cytoplasm. In terms of biological role, an accessory protein needed during the final step in the assembly of 30S ribosomal subunit, possibly for assembly of the head region. Essential for efficient processing of 16S rRNA. May be needed both before and after RbfA during the maturation of 16S rRNA. It has affinity for free ribosomal 30S subunits but not for 70S ribosomes. The sequence is that of Ribosome maturation factor RimM from Sodalis glossinidius (strain morsitans).